A 690-amino-acid chain; its full sequence is Eukaryotic translation initiation factor 3 subunit B (690 aa).

Positions 1 to 11 are enriched in basic and acidic residues; sequence MAKKKSEEHSG. Residues 1–36 are disordered; the sequence is MAKKKSEEHSGADANDSDYQEEPNFEDPPGFVDNIS. The span at 15–25 shows a compositional bias: acidic residues; that stretch reads NDSDYQEEPNF. In terms of domain architecture, RRM spans 57 to 141; the sequence is SVVVVDNIPK…HTFAVNLFTD (85 aa). WD repeat units lie at residues 207 to 246, 293 to 331, 334 to 369, 442 to 484, and 530 to 575; these read TRER…KIQK, DGMS…LLDL, IKIP…TLME, EIRE…KPSL, and PDHF…IKRT. Positions 595 to 645 form a coiled coil; sequence EEKQKEIKKNLKKYYAAFEQKDRLRLTRASKELLEKRSQLRETFMEYRNKR.

The protein belongs to the eIF-3 subunit B family. Component of the eukaryotic translation initiation factor 3 (eIF-3) complex. The eIF-3 complex interacts with pix. Interacts with mxt.

The protein localises to the cytoplasm. In terms of biological role, RNA-binding component of the eukaryotic translation initiation factor 3 (eIF-3) complex, which is involved in protein synthesis of a specialized repertoire of mRNAs and, together with other initiation factors, stimulates binding of mRNA and methionyl-tRNAi to the 40S ribosome. The eIF-3 complex specifically targets and initiates translation of a subset of mRNAs involved in cell proliferation. This Drosophila yakuba (Fruit fly) protein is Eukaryotic translation initiation factor 3 subunit B.